A 464-amino-acid polypeptide reads, in one-letter code: Multifunctional dye peroxidase DyP2 (464 aa).

Catalysis depends on aspartate 203, which acts as the Proton acceptor. Mn(2+) is bound by residues glutamate 258, glutamate 273, and glutamate 284. Heme is bound at residue histidine 321.

It belongs to the DyP-type peroxidase family. In terms of assembly, exists both as a monomeric and oligomeric species in solution; the monomeric form contains no bound heme cofactor and is inactive. The cofactor is heme b. It depends on Mn(2+) as a cofactor.

It is found in the secreted. It carries out the reaction 1-(4-hydroxy-3-methoxyphenyl)-2-(2-methoxyphenoxy)propane-1,3-diol + H2O2 = guaiacol + vanillin + glycolaldehyde + H2O. It catalyses the reaction 2 Mn(2+) + H2O2 + 2 H(+) = 2 Mn(3+) + 2 H2O. The catalysed reaction is 2 a phenolic donor + H2O2 = 2 a phenolic radical donor + 2 H2O. The enzyme catalyses Reactive Blue 5 + 2 H2O2 = 2,2'-disulfonyl azobenzene + 3-[(4-amino-6-chloro-1,3,5-triazin-2-yl)amino]benzenesulfonate + phthalate + 2 H2O + 2 H(+). In terms of biological role, displays both high peroxidase and manganese peroxidase activity. Is likely involved in lignin degradation. Also has a Mn-dependent oxidase mode of action that expands its substrate scope in vitro; is thus able to catalyze the O(2)- and Mn-dependent oxidative decarboxylation of 4-methoxymandelate to anisaldehyde. This is Multifunctional dye peroxidase DyP2 from Amycolatopsis sp. (strain ATCC 39116 / 75iv2).